The following is a 271-amino-acid chain: Dihydropteroate synthase type-2 (271 aa).

The region spanning 1–259 (MNKSLIIFGI…EPRPLRDGLA (259 aa)) is the Pterin-binding domain. Asn12 is a binding site for 4-aminobenzoate. Diphosphate is bound by residues Asn12, Phe18, Ser51, and Ser52. Residue Asn12 participates in Mg(2+) binding. 7,8-dihydropteroate is bound by residues Ser52, Asp85, Asn104, Asp174, Phe179, Lys213, and Ser214. Positions 85, 104, and 174 each coordinate (7,8-dihydropterin-6-yl)methyl diphosphate. Asn104 and Asp174 together coordinate 6-hydroxymethyl-7,8-dihydropterin. Lys213 provides a ligand contact to (7,8-dihydropterin-6-yl)methyl diphosphate. Lys213 is a binding site for 6-hydroxymethyl-7,8-dihydropterin. Arg247 serves as a coordination point for 4-aminobenzoate. Residues Arg247 and His249 each coordinate diphosphate. Residue 247–249 (RTH) coordinates (7,8-dihydropterin-6-yl)methyl diphosphate.

The protein belongs to the DHPS family. As to quaternary structure, homodimer. Requires Mg(2+) as cofactor.

It catalyses the reaction (7,8-dihydropterin-6-yl)methyl diphosphate + 4-aminobenzoate = 7,8-dihydropteroate + diphosphate. Its pathway is cofactor biosynthesis; tetrahydrofolate biosynthesis; 7,8-dihydrofolate from 2-amino-4-hydroxy-6-hydroxymethyl-7,8-dihydropteridine diphosphate and 4-aminobenzoate: step 1/2. Its function is as follows. Catalyzes the condensation of para-aminobenzoate (pABA) with 6-hydroxymethyl-7,8-dihydropterin diphosphate (DHPt-PP) to form 7,8-dihydropteroate (H2Pte), the immediate precursor of folate derivatives. Confers resistance to sulfonamide antibiotics, including sulfamethoxazole (SMX), sulfadiazine and sulfisoxazole. The type II enzyme is stable whereas type I DHPS loses its activity rapidly. This is Dihydropteroate synthase type-2 from Escherichia coli.